Here is a 108-residue protein sequence, read N- to C-terminus: Glutaredoxin-1 (108 aa).

The Glutaredoxin domain maps to 3-106 (EEFVQQRLAN…DILSSIGVLR (104 aa)). Cys23 and Cys26 are oxidised to a cystine.

The protein belongs to the glutaredoxin family.

It localises to the virion. In terms of biological role, has thioltransferase and dehydroascorbate reductase activities. This is Glutaredoxin-1 (OPG075) from Ectromelia virus (strain Moscow) (ECTV).